The chain runs to 397 residues: Mesoderm posterior protein 2 (397 aa).

Disordered regions lie at residues 28 to 92 (WDST…REKL), 152 to 208 (QRGD…GRRP), 222 to 295 (SPSA…VPWT), and 351 to 376 (PNSE…SGLR). Composition is skewed to low complexity over residues 32–48 (SPAS…CDGA) and 58–71 (SCSS…ATTP). Residues 81–135 (GQRQSASEREKLRMRTLARALHELRRFLPPSLAPAGQSLTKIETLRLAIRYIGHL) form the bHLH domain. 13 repeat units span residues 179-180 (GQ), 181-182 (GQ), 183-184 (GQ), 185-186 (GQ), 187-188 (GQ), 189-190 (GQ), 191-192 (GQ), 193-194 (GQ), 195-196 (GQ), 197-198 (GQ), 199-200 (GQ), 201-202 (GQ), and 203-204 (GQ). Residues 179-204 (GQGQGQGQGQGQGQGQGQGQGQGQGQ) form a 13 X 2 AA tandem repeats of G-Q region. A compositionally biased stretch (gly residues) spans 180–206 (QGQGQGQGQGQGQGQGQGQGQGQGQGR). The segment covering 235 to 244 (RLGRGVHDTD) has biased composition (basic and acidic residues). Polar residues-rich tracts occupy residues 258–270 (PPYS…SDAS) and 365–375 (SEASPPQSSGL).

In terms of processing, degraded by the proteasome.

It is found in the nucleus. Its function is as follows. Transcription factor with important role in somitogenesis. Defines the rostrocaudal patterning of the somite by participating in distinct Notch pathways. Also regulates the FGF signaling pathway. Specifies the rostral half of the somites. Generates rostro-caudal polarity of somites by down-regulating in the presumptive rostral domain DLL1, a Notch ligand. Participates in the segment border formation by activating in the anterior presomitic mesoderm LFNG, a negative regulator of DLL1-Notch signaling. Acts as a strong suppressor of Notch activity. Together with MESP1 is involved in the epithelialization of somitic mesoderm and in the development of cardiac mesoderm. The protein is Mesoderm posterior protein 2 (MESP2) of Homo sapiens (Human).